A 497-amino-acid chain; its full sequence is Kynureninase (497 aa).

The segment at glycine 59–aspartate 86 is disordered. Residues alanine 75 to aspartate 86 show a composition bias toward polar residues. Pyridoxal 5'-phosphate contacts are provided by residues leucine 166, threonine 167, phenylalanine 194–aspartate 197, aspartate 278, histidine 281, and tyrosine 303. N6-(pyridoxal phosphate)lysine is present on lysine 304. The pyridoxal 5'-phosphate site is built by tryptophan 337 and asparagine 365.

This sequence belongs to the kynureninase family. In terms of assembly, homodimer. Pyridoxal 5'-phosphate is required as a cofactor.

It is found in the cytoplasm. It carries out the reaction L-kynurenine + H2O = anthranilate + L-alanine + H(+). It catalyses the reaction 3-hydroxy-L-kynurenine + H2O = 3-hydroxyanthranilate + L-alanine + H(+). Its pathway is amino-acid degradation; L-kynurenine degradation; L-alanine and anthranilate from L-kynurenine: step 1/1. It functions in the pathway cofactor biosynthesis; NAD(+) biosynthesis; quinolinate from L-kynurenine: step 2/3. Functionally, catalyzes the cleavage of L-kynurenine (L-Kyn) and L-3-hydroxykynurenine (L-3OHKyn) into anthranilic acid (AA) and 3-hydroxyanthranilic acid (3-OHAA), respectively. This chain is Kynureninase, found in Pyricularia oryzae (strain 70-15 / ATCC MYA-4617 / FGSC 8958) (Rice blast fungus).